The sequence spans 246 residues: Bis(5'-nucleosyl)-tetraphosphatase PrpE [asymmetrical] (246 aa).

Belongs to the PrpE family. It depends on Ni(2+) as a cofactor.

The catalysed reaction is P(1),P(4)-bis(5'-guanosyl) tetraphosphate + H2O = GMP + GTP + 2 H(+). Its function is as follows. Asymmetrically hydrolyzes Ap4p to yield AMP and ATP. This Bacillus cereus (strain ATCC 10987 / NRS 248) protein is Bis(5'-nucleosyl)-tetraphosphatase PrpE [asymmetrical].